Consider the following 230-residue polypeptide: Ropporin-1-like protein (230 aa).

Positions 17-54 constitute an RIIa domain; it reads PELPDILKQFTKAAIRTQPADVLQWSAGYFSALSRGDP.

The protein belongs to the ropporin family. Component of the axonemal radial spoke complex 1 (RS1), at least composed of spoke head proteins RSPH1, RSPH3, RSPH9 and the cilia-specific component RSPH4A or sperm-specific component RSPH6A, spoke stalk proteins RSPH14, DNAJB13, DYDC1, ROPN1L and NME5, and the anchor protein IQUB. May interact with AKAP3. Interacts with FSCB; the interaction increases upon spermatozoa capacitation conditions. Interacts with CFAP61. Sumoylated, sumoylation decreases upon spermatozoa capacitation conditions.

The protein resides in the cell projection. It is found in the cilium. It localises to the flagellum. Functionally, functions as part of axonemal radial spoke complexes that play an important part in the motility of sperm and cilia. Important for male fertility. With ROPN1, involved in fibrous sheath integrity and sperm motility, plays a role in PKA-dependent signaling processes required for spermatozoa capacitation. This is Ropporin-1-like protein (ROPN1L) from Macaca fascicularis (Crab-eating macaque).